An 890-amino-acid polypeptide reads, in one-letter code: DNA mismatch repair protein MutS (890 aa).

Glycine 634–serine 641 is a binding site for ATP.

It belongs to the DNA mismatch repair MutS family.

This protein is involved in the repair of mismatches in DNA. It is possible that it carries out the mismatch recognition step. This protein has a weak ATPase activity. This chain is DNA mismatch repair protein MutS, found in Burkholderia pseudomallei (strain 1710b).